A 199-amino-acid chain; its full sequence is uncharacterized protein (199 aa).

Positions 1–48 (MSANEFYSSGQQGQYNQQNNQERTGAPNNGQYGADNGNPNGERGLFST) are disordered. Position 2 is an N-acetylserine (Ser2). The span at 7–21 (YSSGQQGQYNQQNNQ) shows a compositional bias: low complexity. A compositionally biased stretch (polar residues) spans 22–31 (ERTGAPNNGQ). Ser53 and Ser70 each carry phosphoserine. The disordered stretch occupies residues 89–199 (RKEHKQQEQY…RQGFNGGSRW (111 aa)). Composition is skewed to gly residues over residues 124–163 (GGFG…GFGG), 170–179 (GGPGGQGFGG), and 186–199 (GGQG…GSRW).

The protein resides in the mitochondrion. This is an uncharacterized protein from Saccharomyces cerevisiae (strain ATCC 204508 / S288c) (Baker's yeast).